The chain runs to 440 residues: Chromosome partition protein MukF (440 aa).

The leucine-zipper stretch occupies residues 208 to 236 (LSETSGTLRELQDTLEAAGDKLQANLLRI).

Belongs to the MukF family. Interacts, and probably forms a ternary complex, with MukE and MukB via its C-terminal region. The complex formation is stimulated by calcium or magnesium. It is required for an interaction between MukE and MukB.

The protein localises to the cytoplasm. It is found in the nucleoid. Involved in chromosome condensation, segregation and cell cycle progression. May participate in facilitating chromosome segregation by condensation DNA from both sides of a centrally located replisome during cell division. Not required for mini-F plasmid partitioning. Probably acts via its interaction with MukB and MukE. Overexpression results in anucleate cells. It has a calcium binding activity. The sequence is that of Chromosome partition protein MukF from Photorhabdus laumondii subsp. laumondii (strain DSM 15139 / CIP 105565 / TT01) (Photorhabdus luminescens subsp. laumondii).